Here is a 355-residue protein sequence, read N- to C-terminus: Protein RecA (355 aa).

Residue 72 to 79 (GPESSGKT) coordinates ATP.

This sequence belongs to the RecA family.

Its subcellular location is the cytoplasm. Can catalyze the hydrolysis of ATP in the presence of single-stranded DNA, the ATP-dependent uptake of single-stranded DNA by duplex DNA, and the ATP-dependent hybridization of homologous single-stranded DNAs. It interacts with LexA causing its activation and leading to its autocatalytic cleavage. This chain is Protein RecA, found in Wolbachia pipientis subsp. Culex pipiens (strain wPip).